Reading from the N-terminus, the 156-residue chain is Small ribosomal subunit protein uS7 (156 aa).

It belongs to the universal ribosomal protein uS7 family. As to quaternary structure, part of the 30S ribosomal subunit. Contacts proteins S9 and S11.

Functionally, one of the primary rRNA binding proteins, it binds directly to 16S rRNA where it nucleates assembly of the head domain of the 30S subunit. Is located at the subunit interface close to the decoding center, probably blocks exit of the E-site tRNA. The protein is Small ribosomal subunit protein uS7 of Bacillus cereus (strain G9842).